We begin with the raw amino-acid sequence, 151 residues long: UPF0756 membrane protein lhv_0995 (151 aa).

Helical transmembrane passes span 4–24 (WLFL…SLII), 25–45 (ATGV…LPVI), 52–72 (WGVT…QIGF), 78–98 (TFKS…AILS), and 115–135 (LVLG…GPVI).

The protein belongs to the UPF0756 family.

It is found in the cell membrane. This chain is UPF0756 membrane protein lhv_0995, found in Lactobacillus helveticus (strain DPC 4571).